Reading from the N-terminus, the 570-residue chain is Sulfite reductase [NADPH] hemoprotein beta-component (570 aa).

4 residues coordinate [4Fe-4S] cluster: Cys-434, Cys-440, Cys-479, and Cys-483. Cys-483 provides a ligand contact to siroheme.

Belongs to the nitrite and sulfite reductase 4Fe-4S domain family. As to quaternary structure, alpha(8)-beta(8). The alpha component is a flavoprotein, the beta component is a hemoprotein. Siroheme serves as cofactor. It depends on [4Fe-4S] cluster as a cofactor.

The enzyme catalyses hydrogen sulfide + 3 NADP(+) + 3 H2O = sulfite + 3 NADPH + 4 H(+). The protein operates within sulfur metabolism; hydrogen sulfide biosynthesis; hydrogen sulfide from sulfite (NADPH route): step 1/1. In terms of biological role, component of the sulfite reductase complex that catalyzes the 6-electron reduction of sulfite to sulfide. This is one of several activities required for the biosynthesis of L-cysteine from sulfate. The polypeptide is Sulfite reductase [NADPH] hemoprotein beta-component (Shigella flexneri serotype 5b (strain 8401)).